Consider the following 206-residue polypeptide: MLMLFFTVAMVHIVALMSPGPDFFFVSQTAVSRSRKEAMMGVLGITCGVMVWAGVALLGLHLIIEKMAWLHTIIMVGGGLYLCWMGYQMLRGALKKQDAAASSPHIELAQSGRSFLKGLLTNLSNPKAIIYFGSVFSLFVGDNVGAAARWGIFALITLETLAWFTVVASLFALPKMRRGYQRLAKWIDGFAGALFAGFGIHLIISR.

A helical transmembrane segment spans residues 1 to 21 (MLMLFFTVAMVHIVALMSPGP). Residues 22-43 (DFFFVSQTAVSRSRKEAMMGVL) are Periplasmic-facing. A helical transmembrane segment spans residues 44-64 (GITCGVMVWAGVALLGLHLII). At 65–66 (EK) the chain is on the cytoplasmic side. The helical transmembrane segment at 67–87 (MAWLHTIIMVGGGLYLCWMGY) threads the bilayer. Residues 88 to 149 (QMLRGALKKQ…VGDNVGAAAR (62 aa)) are Periplasmic-facing. A helical transmembrane segment spans residues 150 to 173 (WGIFALITLETLAWFTVVASLFAL). The Cytoplasmic portion of the chain corresponds to 174–206 (PKMRRGYQRLAKWIDGFAGALFAGFGIHLIISR).

It belongs to the Rht family.

Its subcellular location is the cell inner membrane. Conducts the efflux of threonine. The protein is Threonine efflux protein (rhtC) of Salmonella typhi.